The sequence spans 593 residues: NADH-quinone oxidoreductase subunit C/D (593 aa).

The tract at residues Met-1–Gln-184 is NADH dehydrogenase I subunit C. The NADH dehydrogenase I subunit D stretch occupies residues Asp-208 to Arg-593.

The protein in the N-terminal section; belongs to the complex I 30 kDa subunit family. This sequence in the C-terminal section; belongs to the complex I 49 kDa subunit family. In terms of assembly, NDH-1 is composed of 13 different subunits. Subunits NuoB, CD, E, F, and G constitute the peripheral sector of the complex.

The protein localises to the cell inner membrane. The enzyme catalyses a quinone + NADH + 5 H(+)(in) = a quinol + NAD(+) + 4 H(+)(out). Functionally, NDH-1 shuttles electrons from NADH, via FMN and iron-sulfur (Fe-S) centers, to quinones in the respiratory chain. The immediate electron acceptor for the enzyme in this species is believed to be ubiquinone. Couples the redox reaction to proton translocation (for every two electrons transferred, four hydrogen ions are translocated across the cytoplasmic membrane), and thus conserves the redox energy in a proton gradient. In Ectopseudomonas mendocina (strain ymp) (Pseudomonas mendocina), this protein is NADH-quinone oxidoreductase subunit C/D.